The primary structure comprises 553 residues: Solute carrier family 22 member 12 (553 aa).

A helical membrane pass occupies residues 10-30; that stretch reads VGGLGRFQLFQTVALVTPILW. N56 carries N-linked (GlcNAc...) asparagine glycosylation. 11 consecutive transmembrane segments (helical) span residues 146 to 166, 182 to 202, 204 to 224, 232 to 252, 260 to 280, 351 to 371, 378 to 398, 412 to 432, 435 to 455, 466 to 486, and 495 to 515; these read PMAQ…CGHA, LVSV…YCLF, FLLA…LMEW, LVMT…GSVA, MLQL…WWLP, IISM…ALDL, IFLL…GSLL, FLVL…GMGV, SALA…ITIF, MTAV…GPLV, and WMPL…ALLL. Phosphoserine is present on S534. T542 carries the post-translational modification Phosphothreonine.

The protein belongs to the major facilitator (TC 2.A.1) superfamily. Organic cation transporter (TC 2.A.1.19) family. As to quaternary structure, interacts with PDZK1. Post-translationally, N-glycosylated. As to expression, detected in kidney (at protein level). Detected in kidney cortex, in proximal tubules.

The protein resides in the apical cell membrane. It carries out the reaction urate(out) + (S)-lactate(in) = urate(in) + (S)-lactate(out). The catalysed reaction is nicotinate(in) + urate(out) = nicotinate(out) + urate(in). It catalyses the reaction urate(out) + n chloride(in) = urate(in) + n chloride(out). The enzyme catalyses orotate(out) + nicotinate(in) = orotate(in) + nicotinate(out). Electroneutral antiporter that translocates urate across the apical membrane of proximal tubular cells in exchange for monovalent organic or inorganic anions. Involved in renal reabsorption of urate and helps maintaining blood levels of uric acid. Mediates urate uptake by an exchange with organic anions such as (S)-lactate and nicotinate, and inorganic anion Cl(-). Other inorganic anions such as Br(-), I(-) and NO3(-) may also act as counteranions that exchange for urate. Also mediates orotate tubular uptake coupled with nicotinate efflux and to a lesser extent with lactate efflux, therefore displaying a potential role in orotate renal reabsorption. Orotate transport is Cl(-)-dependent. In Mus musculus (Mouse), this protein is Solute carrier family 22 member 12.